The primary structure comprises 7119 residues: Replicase polyprotein 1ab (7119 aa).

A CoV Nsp1 globular domain is found at 25–151 (RSDHVACTVP…EYTFLLRKNG (127 aa)). The region spanning 167–195 (TPYVEILDDLEADPTGKYSQNLLKKLIGG) is the BetaCoV Nsp1 C-terminal domain. The CoV Nsp2 N-terminal domain occupies 197–472 (CIPIDQYMCG…WDKVVETANL (276 aa)). C339, C342, C358, and C360 together coordinate Zn(2+). Residues 339-360 (CNACGRGTWCTGNAIQGFACDC) form a C4 region. One can recognise a CoV Nsp2 middle domain in the interval 478–712 (QRSLNFCQQF…LDIMSKAMKL (235 aa)). One can recognise a CoV Nsp2 C-terminal domain in the interval 714–847 (HTNVSWAGTK…VSTLFRLKGG (134 aa)). The region spanning 851–960 (KKVTFGDVNT…MTFSINPVED (110 aa)) is the Ubiquitin-like 1 domain. Macro domains are found at residues 1152–1321 (DLSK…KPDG) and 1322–1446 (LVYS…AIQT). One can recognise a DPUP domain in the interval 1446–1519 (TPETAFINNV…LEACRAYLTS (74 aa)). Positions 1524 to 1579 (QVNIEVLVTIDGVNFRTVILNDTTTFRKQLGATFYKGVDISDAFPTVKMGGESLFV) constitute a Ubiquitin-like 2 domain. The Peptidase C16 domain maps to 1593–1864 (EYYGTSDVTF…KVEVNPDLSN (272 aa)). Catalysis depends on C1634, which acts as the For PL-PRO activity. Zn(2+) is bound by residues C1714, C1717, C1749, and C1751. The segment at 1714–1751 (CTVCGIRDIEYTGMRACVYAGVNSMEELQSVFNETCVC) adopts a C4-type zinc-finger fold. Residues H1800 and D1815 each act as for PL-PRO activity in the active site. In terms of domain architecture, Nucleic acid-binding spans 1878-1995 (TIKYSPATIL…QLYDVAPIVL (118 aa)). Residues 2012–2133 (HNVPVVDDVP…AKITVTATTA (122 aa)) form the G2M domain. 3 consecutive transmembrane segments (helical) span residues 2112–2132 (VLLG…TATT), 2145–2165 (FVVN…LFFL), and 2222–2242 (LFLL…LVLF). Residues 2112–2395 (VLLGASSLFA…VTHIPLHGLV (284 aa)) are HD1. In terms of domain architecture, 3Ecto spans 2259-2325 (LAIYKEVRSY…LQMLQTHITS (67 aa)). 2 cysteine pairs are disulfide-bonded: C2275–C2303 and C2293–C2300. 3 helical membrane-spanning segments follow: residues 2326–2346 (YVLN…YVLY), 2350–2370 (FNVL…SAFV), and 2375–2395 (YNYI…HGLV). The interval 2409 to 2499 (KFYSHVINGC…TLRRLIKPTD (91 aa)) is Y1. Residues 2409–2782 (KFYSHVINGC…LSVKFSATKI (374 aa)) form the CoV Nsp3 Y domain. Zn(2+) is bound by residues H2413, C2418, C2423, C2426, C2459, H2462, C2466, and C2469. The segment at 2413–2426 (HVINGCKDTACLLC) is ZF1. A ZF2 region spans residues 2459–2469 (CCKHNWNCVEC). Positions 2500 to 2598 (QSHYYVDSVV…LVDVNLVTTV (99 aa)) are Y2. Positions 2500 to 2782 (QSHYYVDSVV…LSVKFSATKI (283 aa)) are coV-Y. The tract at residues 2599 to 2681 (GDSREIAIKM…DALQYAHKND (83 aa)) is Y3. The segment at 2682–2782 (IQLTTECYNN…LSVKFSATKI (101 aa)) is Y4. 4 helical membrane passes run 2800 to 2820 (GYCI…FCLP), 3072 to 3092 (STSL…FYYI), 3105 to 3125 (CAVV…FIVA), and 3149 to 3169 (AFIM…IWML). An HD2 region spans residues 2800–3169 (GYCILTLFVF…FGAVVPIWML (370 aa)). In terms of domain architecture, Nsp4C spans 3195–3291 (VFTDGKLNCS…NCSVTSSVLQ (97 aa)). In terms of domain architecture, Peptidase C30 spans 3292–3597 (SGLVKMSAPS…NMQVMGVVMQ (306 aa)). Active-site for 3CL-PRO activity residues include H3332 and C3439. 7 helical membrane passes run 3603 to 3623 (ISYG…VSVM), 3637 to 3657 (TIPT…MFTV), 3662 to 3682 (TFMS…NIVY), 3707 to 3727 (RTTH…AIIV), 3735 to 3755 (MSNL…YVIG), 3784 to 3804 (LAKF…FILP), and 3808 to 3828 (LVLL…GVFS). An HD3 region spans residues 3603–3828 (ISYGFIHWLI…MCTMYFGVFS (226 aa)). The 83-residue stretch at 3890–3972 (SKLTDLKCTS…DLFENSSVLQ (83 aa)) folds into the RdRp Nsp7 cofactor domain. A RdRp Nsp8 cofactor domain is found at 3973–4171 (ATLTEFSHLA…RSSSSAVKLQ (199 aa)). In terms of domain architecture, Nsp9 ssRNA-binding spans 4172–4281 (NNEIHPKGLK…GHIAATVRLQ (110 aa)). Residues 4282-4420 (AGANTEFASN…DALRNNTVPQ (139 aa)) enclose the ExoN/MTase coactivator domain. Zn(2+)-binding residues include C4355, C4358, H4364, C4371, C4397, C4400, C4408, and C4410. 2 zinc fingers span residues 4355–4371 (CLYC…SGVC) and 4397–4410 (CNVC…GCNC). The region spanning 4426 to 4683 (FLNRVRGSSV…AAETHKDCDF (258 aa)) is the NiRAN domain. N4631 and D4640 together coordinate Mn(2+). The region spanning 4688–4786 (IEWPLLEYDY…MNMDFNIHRH (99 aa)) is the Nsp12 Interface domain. Zn(2+)-binding residues include H4717, C4723, C4728, C4732, and C4909. The region spanning 4787-5354 (RLALKELMMY…DLYSSPTTLQ (568 aa)) is the Nsp12 RNA-dependent RNA polymerase domain. The rdRp Fingers N-ter stretch occupies residues 4789 to 5003 (ALKELMMYAA…HQKMLKSMAA (215 aa)). The segment at 5004–5042 (TRGATCVIGTTKFYGGWDFMLKTLYKDVESPHLMGWDYP) is rdRp Palm N-ter. A RdRp catalytic domain is found at 5034–5196 (PHLMGWDYPK…CYNSDYAAKG (163 aa)). Positions 5043–5101 (KCDRAMPNMCRILASLILARKHSTCCTNSDRFYRLANECAQVLSEYVLCGGGYYVKPGG) are rdRp Fingers C-ter. Positions 5064, 5067, and 5068 each coordinate Zn(2+). The tract at residues 5102–5237 (TSSGDATTAY…EKGPHEFCSQ (136 aa)) is rdRp Palm C-ter. Residues S5181, D5182, and D5183 contribute to the active site. The rdRp Thumb stretch occupies residues 5238–5354 (HTLYIKDGDD…DLYSSPTTLQ (117 aa)). One can recognise a CV ZBD domain in the interval 5355–5467 (AVGSCVVCHS…MEFNRLATCD (113 aa)). The Zn(2+) site is built by C5359, C5362, C5370, C5373, C5380, C5383, H5387, H5393, C5404, C5409, C5426, and H5429. The (+)RNA virus helicase ATP-binding domain maps to 5611 to 5792 (TVPEEFANHV…MCNLGPDIFL (182 aa)). 5636 to 5643 (GPPGTGKS) is an ATP binding site. In terms of domain architecture, (+)RNA virus helicase C-terminal spans 5793-5967 (SVCYRCPKEI…GLFKDCSRED (175 aa)). Residues 6024-6239 (LFITRDEAIR…RCLAIYDCFI (216 aa)) form the ExoN domain. Active-site residues include D6042, E6044, and E6143. C6159, C6162, C6178, H6181, H6209, C6213, and H6216 together coordinate Zn(2+). Active-site residues include H6220 and D6225. Residue C6231 participates in Zn(2+) binding. One can recognise an N7-MTase domain in the interval 6248–6475 (YPYISHEQKL…NLWSTFVKVQ (228 aa)). Residue 6283 to 6289 (DIGNPKG) participates in S-adenosyl-L-methionine binding. The gpppA-binding stretch occupies residues 6361 to 6375 (CNGGSLYVNKHAFHT). Zn(2+)-binding residues include C6399, C6421, C6432, and H6435. One can recognise a Nsp15 N-terminal oligomerization domain in the interval 6476–6536 (GLENIAFNVI…NVAFELYAKR (61 aa)). The region spanning 6537–6658 (AVRSHPDLNL…LYKKVNNEFV (122 aa)) is the AV-Nsp11N/CoV-Nsp15M domain. One can recognise a NendoU domain in the interval 6675–6814 (TVLTPMEEDF…RDGKVQTFYP (140 aa)). Active-site residues include H6705, H6720, K6760, K6863, D6947, K6987, and E7020. Residues 6819 to 7113 (TNDWKPGLTM…TLNVSTDVLV (295 aa)) enclose the Nidovirus-type SAM-dependent 2'-O-MTase domain.

The protein belongs to the coronaviruses polyprotein 1ab family. Interacts with host PHB and PHB2. As to quaternary structure, interacts with papain-like protease nsp3 and non-structural protein 6. In terms of assembly, monomer. Homodimer. Only the homodimer shows catalytic activity. Interacts with nsp8 and nsp12 to form the replication-transcription complex (RTC): nsp12, nsp7, two subunits of nsp8, and up to two subunits of nsp13. As to quaternary structure, interacts with nsp7, nsp13 and nsp12 to form the replication-transcription complex (RTC): nsp12, nsp7, two subunits of nsp8, and up to two subunits of nsp13. In terms of assembly, interacts with nsp12. Interacts with proofreading exoribonuclease nsp14 and 2'-O-methyltransferase nsp16; these interactions enhance nsp14 and nsp16 enzymatic activities. As to quaternary structure, interacts with nsp7 and nsp8 to form the replication-transcription complex (RTC): nsp12, nsp7, two subunits of nsp8, and up to two subunits of nsp13. Interacts with nsp9. In terms of assembly, interacts with nsp8 to form the replication-transcription complex (RTC): nsp12, nsp7, two subunits of nsp8, and up to two subunits of nsp13. Mn(2+) is required as a cofactor. The cofactor is Mg(2+). In terms of processing, specific enzymatic cleavages in vivo by its own proteases yield mature proteins. 3CL-PRO and PL-PRO proteinases are autocatalytically processed.

Its subcellular location is the host membrane. The protein resides in the host cytoplasm. It is found in the host perinuclear region. The protein localises to the host endoplasmic reticulum-Golgi intermediate compartment. The enzyme catalyses RNA(n) + a ribonucleoside 5'-triphosphate = RNA(n+1) + diphosphate. It carries out the reaction ATP + H2O = ADP + phosphate + H(+). The catalysed reaction is Thiol-dependent hydrolysis of ester, thioester, amide, peptide and isopeptide bonds formed by the C-terminal Gly of ubiquitin (a 76-residue protein attached to proteins as an intracellular targeting signal).. It catalyses the reaction a 5'-end (N(7)-methyl 5'-triphosphoguanosine)-ribonucleoside in mRNA + S-adenosyl-L-methionine = a 5'-end (N(7)-methyl 5'-triphosphoguanosine)-(2'-O-methyl-ribonucleoside) in mRNA + S-adenosyl-L-homocysteine + H(+). The enzyme catalyses uridylyl-uridylyl-ribonucleotide-RNA = a 3'-end uridylyl-2',3'-cyclophospho-uridine-RNA + a 5'-end dephospho-ribonucleoside-RNA. It carries out the reaction a 5'-end diphospho-ribonucleoside in mRNA + GTP + H(+) = a 5'-end (5'-triphosphoguanosine)-ribonucleoside in mRNA + diphosphate. The catalysed reaction is a 5'-end (5'-triphosphoguanosine)-ribonucleoside in mRNA + S-adenosyl-L-methionine = a 5'-end (N(7)-methyl 5'-triphosphoguanosine)-ribonucleoside in mRNA + S-adenosyl-L-homocysteine. Functionally, the replicase polyprotein of coronaviruses is a multifunctional protein: it contains the activities necessary for the transcription of negative stranded RNA, leader RNA, subgenomic mRNAs and progeny virion RNA as well as proteinases responsible for the cleavage of the polyprotein into functional products. In terms of biological role, inhibits host translation by interacting with the 40S ribosomal subunit. The nsp1-40S ribosome complex further induces an endonucleolytic cleavage near the 5'UTR of host mRNAs, targeting them for degradation. Viral mRNAs are not susceptible to nsp1-mediated endonucleolytic RNA cleavage thanks to the presence of a 5'-end leader sequence and are therefore protected from degradation. By suppressing host gene expression, nsp1 facilitates efficient viral gene expression in infected cells and evasion from host immune response. May play a role in the modulation of host cell survival signaling pathway by interacting with host PHB and PHB2. Indeed, these two proteins play a role in maintaining the functional integrity of the mitochondria and protecting cells from various stresses. Its function is as follows. Responsible for the cleavages located at the N-terminus of the replicase polyprotein. In addition, PL-PRO possesses a deubiquitinating/deISGylating activity and processes both 'Lys-48'- and 'Lys-63'-linked polyubiquitin chains from cellular substrates. Participates together with nsp4 in the assembly of virally-induced cytoplasmic double-membrane vesicles necessary for viral replication. Antagonizes innate immune induction of type I interferon by blocking the phosphorylation, dimerization and subsequent nuclear translocation of host IRF3. Also prevents host NF-kappa-B signaling. Functionally, participates in the assembly of virally-induced cytoplasmic double-membrane vesicles necessary for viral replication. In terms of biological role, cleaves the C-terminus of replicase polyprotein at 11 sites. Recognizes substrates containing the core sequence [ILMVF]-Q-|-[SGACN]. Also able to bind an ADP-ribose-1''-phosphate (ADRP). Plays a role in the initial induction of autophagosomes from host endoplasmic reticulum. Later, limits the expansion of these phagosomes that are no longer able to deliver viral components to lysosomes. Its function is as follows. Forms a hexadecamer with nsp8 (8 subunits of each) that may participate in viral replication by acting as a primase. Alternatively, may synthesize substantially longer products than oligonucleotide primers. Functionally, forms a hexadecamer with nsp7 (8 subunits of each) that may participate in viral replication by acting as a primase. Alternatively, may synthesize substantially longer products than oligonucleotide primers. In terms of biological role, forms a primer, NSP9-pU, which is utilized by the polymerase for the initiation of RNA chains. Interacts with ribosome signal recognition particle RNA (SRP). Together with NSP8, suppress protein integration into the cell membrane, thereby disrupting host immune defenses. Plays a pivotal role in viral transcription by stimulating both nsp14 3'-5' exoribonuclease and nsp16 2'-O-methyltransferase activities. Therefore plays an essential role in viral mRNAs cap methylation. Its function is as follows. RNA-directed RNA polymerase that catalyzes the transcription of viral genomic and subgenomic RNAs. Acts in complex with nsp7 and nsp8 to transcribe both the minus and positive strands of genomic RNA. The kinase-like NiRAN domain of NSP12 attaches one or more nucleotides to the amino terminus of NSP9, forming a covalent RNA-protein intermediate that serves as transcription/replication primer. Subgenomic RNAs (sgRNAs) are formed by discontinuous transcription: The polymerase has the ability to pause at transcription-regulating sequences (TRS) and jump to the leader TRS, resulting in a major deletion. This creates a series of subgenomic RNAs that are replicated, transcribed and translated. In addition, Nsp12 is a subunit of the viral RNA capping enzyme that catalyzes the RNA guanylyltransferase reaction for genomic and sub-genomic RNAs. Subsequently, the NiRAN domain transfers RNA to GDP, and forms the core cap structure GpppA-RNA. Functionally, RNA-directed RNA polymerase that catalyzes the transcription of viral genomic and subgenomic RNAs. Acts in complex with nsp7 and nsp8 to transcribe both the minus and positive strands of genomic RNA. Subgenomic RNAs (sgRNAs) are formed by discontinuous transcription: The polymerase has the ability to pause at transcription-regulating sequences (TRS) and jump to the leader TRS, resulting in a major deletion. This creates a series of subgenomic RNAs that are replicated, transcribed and translated. In addition, Nsp12 is a subunit of the viral RNA capping enzyme that catalyzes the RNA guanylyltransferase reaction for genomic and sub-genomic RNAs. The kinase-like NiRAN domain of NSP12 transfers RNA to the amino terminus of NSP9, forming a covalent RNA-protein intermediate. Subsequently, the NiRAN domain transfers RNA to GDP, and forms the core cap structure GpppA-RNA. In terms of biological role, multi-functional protein with a zinc-binding domain in N-terminus displaying RNA and DNA duplex-unwinding activities with 5' to 3' polarity. Activity of helicase is dependent on magnesium. Plays a role in viral RNA synthesis through two distinct activities. The N7-guanine methyltransferase activity plays a role in the formation of the cap structure GpppA-RNA. The proofreading exoribonuclease reduces the sensitivity of the virus to RNA mutagens during replication. This activity acts on both ssRNA and dsRNA in a 3'-5' direction. Its function is as follows. Plays a role in viral transcription/replication and prevents the simultaneous activation of host cell dsRNA sensors, such as MDA5/IFIH1, OAS, and PKR. Acts by degrading the 5'-polyuridines generated during replication of the poly(A) region of viral genomic and subgenomic RNAs. Catalyzes a two-step reaction in which a 2'3'-cyclic phosphate (2'3'-cP) is first generated by 2'-O transesterification, which is then hydrolyzed to a 3'-phosphate (3'-P). If not degraded, poly(U) RNA would hybridize with poly(A) RNA tails and activate host dsRNA sensors. Functionally, methyltransferase that mediates mRNA cap 2'-O-ribose methylation to the 5'-cap structure of viral mRNAs. N7-methyl guanosine cap is a prerequisite for binding of nsp16. Therefore plays an essential role in viral mRNAs cap methylation which is essential to evade immune system. This is Replicase polyprotein 1ab (rep) from Tylonycteris pachypus (Lesser bamboo bat).